The sequence spans 194 residues: Peptidyl-tRNA hydrolase (194 aa).

Tyr16 provides a ligand contact to tRNA. Catalysis depends on His21, which acts as the Proton acceptor. Residues Phe67, Asn69, and Asn115 each contribute to the tRNA site.

Belongs to the PTH family. Monomer.

It is found in the cytoplasm. The enzyme catalyses an N-acyl-L-alpha-aminoacyl-tRNA + H2O = an N-acyl-L-amino acid + a tRNA + H(+). Hydrolyzes ribosome-free peptidyl-tRNAs (with 1 or more amino acids incorporated), which drop off the ribosome during protein synthesis, or as a result of ribosome stalling. Functionally, catalyzes the release of premature peptidyl moieties from peptidyl-tRNA molecules trapped in stalled 50S ribosomal subunits, and thus maintains levels of free tRNAs and 50S ribosomes. In Shigella dysenteriae serotype 1 (strain Sd197), this protein is Peptidyl-tRNA hydrolase.